The sequence spans 305 residues: UDP-N-acetylenolpyruvoylglucosamine reductase (305 aa).

The FAD-binding PCMH-type domain occupies 33-198; that stretch reads RVGGPAQVLF…TGGTFRGRRA (166 aa). R178 is an active-site residue. Catalysis depends on S227, which acts as the Proton donor. E297 is a catalytic residue.

The protein belongs to the MurB family. FAD is required as a cofactor.

The protein resides in the cytoplasm. The enzyme catalyses UDP-N-acetyl-alpha-D-muramate + NADP(+) = UDP-N-acetyl-3-O-(1-carboxyvinyl)-alpha-D-glucosamine + NADPH + H(+). Its pathway is cell wall biogenesis; peptidoglycan biosynthesis. Cell wall formation. The polypeptide is UDP-N-acetylenolpyruvoylglucosamine reductase (Nitrobacter hamburgensis (strain DSM 10229 / NCIMB 13809 / X14)).